Consider the following 71-residue polypeptide: Ribosome modulation factor (71 aa).

This sequence belongs to the ribosome modulation factor family.

It is found in the cytoplasm. Functionally, during stationary phase, converts 70S ribosomes to an inactive dimeric form (100S ribosomes). This chain is Ribosome modulation factor, found in Pseudomonas savastanoi pv. phaseolicola (strain 1448A / Race 6) (Pseudomonas syringae pv. phaseolicola (strain 1448A / Race 6)).